The primary structure comprises 646 residues: Lipoteichoic acid synthase (646 aa).

Residues 1–7 (MKLHKKK) lie on the Cytoplasmic side of the membrane. A helical transmembrane segment spans residues 8–28 (LTLFAFFILTVLTVTLKTYFS). Residues 29-43 (YYVDFSLGVKGLVQN) are Extracellular-facing. The chain crosses the membrane as a helical span at residues 44 to 64 (LILLMNPYSLIALVLSIFLFF). The Cytoplasmic portion of the chain corresponds to 65 to 68 (KGKK). Residues 69-89 (AFWFIFIGGFILTFLLYANVV) form a helical membrane-spanning segment. At 90–119 (YFRFFSDFLTFSTLNQAGNVESMGGAVTAS) the chain is on the extracellular side. The chain crosses the membrane as a helical span at residues 120 to 140 (FKWYDFVYFIDTIIYLFVLIF). Residues 141-153 (KQKWLDKRVFSKK) are Cytoplasmic-facing. Residues 154–174 (FVPVVMAASIALFFLNLAFAE) form a helical membrane-spanning segment. Residues 175–646 (SDRPELLTRT…KTGPKGQERK (472 aa)) lie on the Extracellular side of the membrane. Glutamate 255 and threonine 300 together coordinate Mn(2+). The active site involves threonine 300. Histidine 416 serves as a coordination point for substrate. Mn(2+)-binding residues include aspartate 475 and histidine 476. Positions 579–646 (IYDNKNNEPM…KTGPKGQERK (68 aa)) are disordered. Composition is skewed to basic and acidic residues over residues 580-607 (YDNK…KDLQ) and 625-646 (DFDK…QERK).

This sequence belongs to the LTA synthase family. In terms of processing, proteolytically cleaved.

It localises to the cell membrane. Its subcellular location is the secreted. It participates in cell wall biogenesis; lipoteichoic acid biosynthesis. In terms of biological role, catalyzes the polymerization of lipoteichoic acid (LTA) polyglycerol phosphate, a reaction that presumably uses phosphatidylglycerol (PG) as substrate. Is required for staphylococcal growth and cell division process. The protein is Lipoteichoic acid synthase (ltaS) of Staphylococcus saprophyticus subsp. saprophyticus (strain ATCC 15305 / DSM 20229 / NCIMB 8711 / NCTC 7292 / S-41).